Consider the following 633-residue polypeptide: Threonine--tRNA ligase (633 aa).

The 61-residue stretch at 1-61 folds into the TGS domain; that stretch reads MINISFPDGS…DNDCRLRILT (61 aa). The interval 242-533 is catalytic; sequence DHRKLGKELD…LIEEYAGRFP (292 aa). Zn(2+) contacts are provided by Cys-333, His-384, and His-510.

It belongs to the class-II aminoacyl-tRNA synthetase family. In terms of assembly, homodimer. It depends on Zn(2+) as a cofactor.

The protein resides in the cytoplasm. It carries out the reaction tRNA(Thr) + L-threonine + ATP = L-threonyl-tRNA(Thr) + AMP + diphosphate + H(+). Catalyzes the attachment of threonine to tRNA(Thr) in a two-step reaction: L-threonine is first activated by ATP to form Thr-AMP and then transferred to the acceptor end of tRNA(Thr). Also edits incorrectly charged L-seryl-tRNA(Thr). The protein is Threonine--tRNA ligase of Rickettsia bellii (strain OSU 85-389).